The primary structure comprises 267 residues: Small ribosomal subunit protein uS3 (267 aa).

The 69-residue stretch at 43-111 (IRKEMSKDLE…QVQLNIFEVK (69 aa)) folds into the KH type-2 domain. Residues 216-267 (FEEQQAQQNNRPGRRGGDRRPRRGNRSAAPQAAEAPKAEAPAEAAPAAETKE) form a disordered region. A compositionally biased stretch (low complexity) spans 241–267 (RSAAPQAAEAPKAEAPAEAAPAAETKE).

Belongs to the universal ribosomal protein uS3 family. Part of the 30S ribosomal subunit. Forms a tight complex with proteins S10 and S14.

Its function is as follows. Binds the lower part of the 30S subunit head. Binds mRNA in the 70S ribosome, positioning it for translation. The sequence is that of Small ribosomal subunit protein uS3 from Bifidobacterium longum subsp. infantis (strain ATCC 15697 / DSM 20088 / JCM 1222 / NCTC 11817 / S12).